A 340-amino-acid chain; its full sequence is Dihydroorotate dehydrogenase (quinone) (340 aa).

FMN contacts are provided by residues 65-69 (AGLDK) and T89. K69 is a binding site for substrate. 114-118 (NRMGF) contacts substrate. Residues N142 and N175 each coordinate FMN. A substrate-binding site is contributed by N175. Catalysis depends on S178, which acts as the Nucleophile. A substrate-binding site is contributed by N180. 2 residues coordinate FMN: K220 and T248. Substrate is bound at residue 249–250 (NT). Residues G271, G300, and 321 to 322 (YT) contribute to the FMN site.

Belongs to the dihydroorotate dehydrogenase family. Type 2 subfamily. In terms of assembly, monomer. FMN is required as a cofactor.

The protein localises to the cell membrane. The enzyme catalyses (S)-dihydroorotate + a quinone = orotate + a quinol. It participates in pyrimidine metabolism; UMP biosynthesis via de novo pathway; orotate from (S)-dihydroorotate (quinone route): step 1/1. Its function is as follows. Catalyzes the conversion of dihydroorotate to orotate with quinone as electron acceptor. The sequence is that of Dihydroorotate dehydrogenase (quinone) from Paraburkholderia xenovorans (strain LB400).